The sequence spans 88 residues: Large ribosomal subunit protein bL27 (88 aa).

Residues 1 to 26 (MAHKKGTGSTRNGRDSNSKRLGVKAY) form a disordered region.

Belongs to the bacterial ribosomal protein bL27 family.

The polypeptide is Large ribosomal subunit protein bL27 (Prochlorococcus marinus (strain MIT 9211)).